Here is a 127-residue protein sequence, read N- to C-terminus: Holo-[acyl-carrier-protein] synthase (127 aa).

Mg(2+) contacts are provided by Asp8 and Glu56.

It belongs to the P-Pant transferase superfamily. AcpS family. The cofactor is Mg(2+).

It is found in the cytoplasm. The catalysed reaction is apo-[ACP] + CoA = holo-[ACP] + adenosine 3',5'-bisphosphate + H(+). Transfers the 4'-phosphopantetheine moiety from coenzyme A to a Ser of acyl-carrier-protein. The polypeptide is Holo-[acyl-carrier-protein] synthase (Cytophaga hutchinsonii (strain ATCC 33406 / DSM 1761 / CIP 103989 / NBRC 15051 / NCIMB 9469 / D465)).